Reading from the N-terminus, the 208-residue chain is Claudin-like protein ZF-A89 (208 aa).

4 consecutive transmembrane segments (helical) span residues 8 to 28 (LLAT…CALP), 82 to 102 (ALVV…IAGG), 117 to 137 (VVVA…IPVC), and 160 to 180 (LGAS…GGAL).

Belongs to the claudin family.

Its subcellular location is the cell membrane. It is found in the cell junction. The protein resides in the tight junction. Functionally, component of tight junction (TJ) strands. The protein is Claudin-like protein ZF-A89 (cldnd) of Danio rerio (Zebrafish).